The primary structure comprises 789 residues: Ent-kaurene synthase TSP4, chloroplastic (789 aa).

2 residues coordinate Mg(2+): aspartate 540 and aspartate 544. Positions 540–544 (DDFFD) match the DDXXD motif motif. The chain crosses the membrane as a helical span at residues 638-656 (AYVSFALGPIVLPALYLVG). Mg(2+)-binding residues include asparagine 684, arginine 687, and glutamate 692.

It belongs to the terpene synthase family. Requires Mg(2+) as cofactor. As to expression, expressed in leaves and fruits, including trichomes.

The protein resides in the plastid. It is found in the chloroplast membrane. The catalysed reaction is ent-copalyl diphosphate = ent-kaur-16-ene + diphosphate. The protein operates within plant hormone biosynthesis; gibberellin biosynthesis. Functionally, involved in the biosynthesis of labdane-type diterpenoid including cleroda-dienols, and peregrinol lactones and furan derivatives, dopaminergic diterpenoids that can bind to dopamine receptors in the human pituitary gland, have probably ability to lower prolactin levels, and are used to treat menstrual cycle disorders (e.g. premenstrual syndrome and mastodynia). Terpene synthase that produces ent-kaurene from ent-copalyl diphosphate. In Vitex agnus-castus (Chaste tree), this protein is Ent-kaurene synthase TSP4, chloroplastic.